Here is a 337-residue protein sequence, read N- to C-terminus: Trace amine-associated receptor 5 (337 aa).

The Extracellular portion of the chain corresponds to 1-34; that stretch reads MRAVFIQGAEEHPAAFCYQVNGSCPRTVHTLGIQ. N21 carries an N-linked (GlcNAc...) asparagine glycan. 2 disulfide bridges follow: C24–C188 and C99–C192. A helical membrane pass occupies residues 35-55; the sequence is LVIYLACAAGMLIIVLGNVFV. The Cytoplasmic segment spans residues 56 to 70; it reads AFAVSYFKALHTPTN. A helical transmembrane segment spans residues 71-91; it reads FLLLSLALADMFLGLLVLPLS. Over 92–109 the chain is Extracellular; the sequence is TIRSVESCWFFGDFLCRL. A helical transmembrane segment spans residues 110-130; it reads HTYLDTLFCLTSIFHLCFISI. At 131 to 154 the chain is on the cytoplasmic side; sequence DRHCAICDPLLYPSKFTVRVALRY. The chain crosses the membrane as a helical span at residues 155–175; the sequence is ILAGWGVPAAYTSLFLYTDVV. An extracellular Loop 2 (ECL2) region spans residues 176–189; that stretch reads ETRLSQWLEEMPCV. The Extracellular segment spans residues 176–204; sequence ETRLSQWLEEMPCVGSCQLLLNKFWGWLN. A helical membrane pass occupies residues 205 to 225; that stretch reads FPLFFVPCLIMISLYVKIFVV. The Cytoplasmic segment spans residues 226 to 253; it reads ATRQAQQITTLSKSLAGAAKHERKAAKT. A helical membrane pass occupies residues 254 to 274; sequence LGIAVGIYLLCWLPFTIDTMV. At 275–284 the chain is on the extracellular side; that stretch reads DSLLHFITPP. The chain crosses the membrane as a helical span at residues 285 to 307; it reads LVFDIFIWFAYFNSACNPIIYVF. The Cytoplasmic portion of the chain corresponds to 308 to 337; it reads SYQWFRKALKLTLSQKVFSPQTRTVDLYQE.

The protein belongs to the G-protein coupled receptor 1 family. Expressed almost exclusively in skeletal muscle and selected areas of the brain, such amygdala, hippocampus, caudate nucleus, thalamus and hypothalamus. Weak expression is also find in substantia nigra.

It is found in the cell membrane. Functionally, olfactory receptor specific for trimethylamine, a trace amine. Also activated at lower level by dimethylethylamine. Trimethylamine is a bacterial metabolite found in some animal odors, and to humans it is a repulsive odor associated with bad breath and spoiled food. Trimethylamine-binding causes a conformation change that triggers signaling via G(s)-class of G alpha proteins (GNAL or GNAS). The protein is Trace amine-associated receptor 5 of Homo sapiens (Human).